The following is a 262-amino-acid chain: Light-harvesting complex-like protein 3 isotype 1, chloroplastic (262 aa).

The N-terminal 39 residues, 1–39 (MALFSPPISSSSLQNPNFIPKFSFSLLSSNRFSLLSVTR), are a transit peptide targeting the chloroplast. The next 2 helical transmembrane spans lie at 180-200 (AAMI…VGLV) and 202-222 (QMGN…VLFI).

Interacts with GGR. Forms homodimer, and heterodimer with LIL3.2. In terms of tissue distribution, expressed in photosynthetically active tissues (at protein level).

It localises to the plastid. The protein localises to the chloroplast thylakoid membrane. Functionally, light-harvesting-like protein required for biosynthesis of phytylated chlorophylls and alpha-tocopherol in green seedlings. Functions by anchoring geranylgeranyl reductase (GGR) in the thylakoid membrane, leading to the stabilization of GGR activity. Binds chlorophyll a in the thylakoid membrane. Plays a role in the regulation of chlorophyll biosynthesis under light stress and under standard growth conditions. In Arabidopsis thaliana (Mouse-ear cress), this protein is Light-harvesting complex-like protein 3 isotype 1, chloroplastic (LIL3.1).